The sequence spans 264 residues: Small ribosomal subunit protein uS3 (264 aa).

A KH type-2 domain is found at 39–107; that stretch reads VRDFLKKKLK…PVHVNIEEIR (69 aa). The segment at 211-264 is disordered; it reads NDAPVVEEPQDDRRRRPGRPEGRRREGEGRPGGNRRGGAGAGRRAAPGDAKSGE. Basic and acidic residues predominate over residues 221 to 239; the sequence is DDRRRRPGRPEGRRREGEG. The segment covering 240–251 has biased composition (gly residues); the sequence is RPGGNRRGGAGA.

Belongs to the universal ribosomal protein uS3 family. In terms of assembly, part of the 30S ribosomal subunit. Forms a tight complex with proteins S10 and S14.

Functionally, binds the lower part of the 30S subunit head. Binds mRNA in the 70S ribosome, positioning it for translation. The chain is Small ribosomal subunit protein uS3 from Cupriavidus pinatubonensis (strain JMP 134 / LMG 1197) (Cupriavidus necator (strain JMP 134)).